The sequence spans 179 residues: Large ribosomal subunit protein uL5 (179 aa).

The protein belongs to the universal ribosomal protein uL5 family. As to quaternary structure, part of the 50S ribosomal subunit; part of the 5S rRNA/L5/L18/L25 subcomplex. Contacts the 5S rRNA and the P site tRNA. Forms a bridge to the 30S subunit in the 70S ribosome.

This is one of the proteins that bind and probably mediate the attachment of the 5S RNA into the large ribosomal subunit, where it forms part of the central protuberance. In the 70S ribosome it contacts protein S13 of the 30S subunit (bridge B1b), connecting the 2 subunits; this bridge is implicated in subunit movement. Contacts the P site tRNA; the 5S rRNA and some of its associated proteins might help stabilize positioning of ribosome-bound tRNAs. The sequence is that of Large ribosomal subunit protein uL5 from Prochlorococcus marinus (strain MIT 9312).